The sequence spans 348 residues: Small ribosomal subunit protein mS45 (348 aa).

A compositionally biased stretch (low complexity) spans 37 to 57; that stretch reads SCSSSSPQSSQPTTHQQQCSS. The segment at 37–63 is disordered; sequence SCSSSSPQSSQPTTHQQQCSSFSTTAP.

This sequence belongs to the mitochondrion-specific ribosomal protein mS45 family. As to quaternary structure, component of the mitochondrial small ribosomal subunit (mt-SSU). Mature N.crassa 74S mitochondrial ribosomes consist of a small (37S) and a large (54S) subunit. The 37S small subunit contains a 16S ribosomal RNA (16S mt-rRNA) and 32 different proteins. The 54S large subunit contains a 23S rRNA (23S mt-rRNA) and 42 different proteins.

It is found in the mitochondrion. Component of the mitochondrial ribosome (mitoribosome), a dedicated translation machinery responsible for the synthesis of mitochondrial genome-encoded proteins, including at least some of the essential transmembrane subunits of the mitochondrial respiratory chain. The mitoribosomes are attached to the mitochondrial inner membrane and translation products are cotranslationally integrated into the membrane. This Neurospora crassa (strain ATCC 24698 / 74-OR23-1A / CBS 708.71 / DSM 1257 / FGSC 987) protein is Small ribosomal subunit protein mS45 (mrps35).